We begin with the raw amino-acid sequence, 465 residues long: MKGIISQVMGPVVDVDFKDYLPKINEAIEVKYDVEGIQKRLVLEVAAHLGDNKVRTIAMDMSDGLRRGLEAEALGAPISVPVGKKVLGRIFNVTGDLIDEGEPEDFETRWSIHRDPPSFEDQSTKSEIFETGIKVVDLLAPYAKGGKVGLFGGAGVGKTVIIMELIHNVAFKHNGYSVFAGVGERTREGNDLYNEMKESGVLDKVALTYGQMNEPPGARNRIALTGLTMAEYFRDELGLDVLMFIDNIFRFSQSGSEMSALLGRIPSAVGYQPTLASEMGKLQERITSTKKGSITSVQAVYVPADDLTDPAPATVFAHLDATTVLNRSIAEKGIYPAVDPLNSTSRMLDPQIVGEEHYKIARGVQAVLQKYKDLQDIIAILGMDELSEEDKLVVERARKIEKYLSQPFFVAEVFTGSPGKYISLEDTIAGFKGILEGKYDDLPENAFYMVGSIDEVLAKAEKMKA.

Residue 152–159 coordinates ATP; sequence GGAGVGKT.

Belongs to the ATPase alpha/beta chains family. F-type ATPases have 2 components, CF(1) - the catalytic core - and CF(0) - the membrane proton channel. CF(1) has five subunits: alpha(3), beta(3), gamma(1), delta(1), epsilon(1). CF(0) has three main subunits: a(1), b(2) and c(9-12). The alpha and beta chains form an alternating ring which encloses part of the gamma chain. CF(1) is attached to CF(0) by a central stalk formed by the gamma and epsilon chains, while a peripheral stalk is formed by the delta and b chains.

The protein resides in the cell inner membrane. It catalyses the reaction ATP + H2O + 4 H(+)(in) = ADP + phosphate + 5 H(+)(out). Produces ATP from ADP in the presence of a proton gradient across the membrane. The catalytic sites are hosted primarily by the beta subunits. The polypeptide is ATP synthase subunit beta (Campylobacter hominis (strain ATCC BAA-381 / DSM 21671 / CCUG 45161 / LMG 19568 / NCTC 13146 / CH001A)).